A 27-amino-acid chain; its full sequence is GFASFLGKALKAALKIGANMLGGAPQQ.

In terms of tissue distribution, expressed by the skin glands.

It is found in the secreted. Its function is as follows. Antimicrobial peptide. The sequence is that of Caerulein precursor fragment R8 from Xenopus ruwenzoriensis (Uganda clawed frog).